Reading from the N-terminus, the 198-residue chain is Na(+)-translocating NADH-quinone reductase subunit E (198 aa).

6 consecutive transmembrane segments (helical) span residues 11–31, 35–55, 77–97, 110–130, 140–160, and 176–196; these read SVFI…FLAV, VSTA…AVPV, FLNF…LEMV, GIFL…SFMV, VVYG…LAGI, and LGIT…FSGI.

This sequence belongs to the NqrDE/RnfAE family. As to quaternary structure, composed of six subunits; NqrA, NqrB, NqrC, NqrD, NqrE and NqrF.

The protein localises to the cell inner membrane. The catalysed reaction is a ubiquinone + n Na(+)(in) + NADH + H(+) = a ubiquinol + n Na(+)(out) + NAD(+). NQR complex catalyzes the reduction of ubiquinone-1 to ubiquinol by two successive reactions, coupled with the transport of Na(+) ions from the cytoplasm to the periplasm. NqrA to NqrE are probably involved in the second step, the conversion of ubisemiquinone to ubiquinol. The sequence is that of Na(+)-translocating NADH-quinone reductase subunit E from Pasteurella multocida (strain Pm70).